The primary structure comprises 89 residues: OMEGA-ectatommitoxin(02)-Rm1b (89 aa).

The signal sequence occupies residues Met1–Gly30. Intrachain disulfides connect Cys39-Cys52, Cys47-Cys68, and Cys70-Cys79. In terms of domain architecture, EGF-like spans Tyr43–Gly80.

Belongs to the EGF domain peptide family. Expressed by the venom gland.

The protein localises to the secreted. Its function is as follows. Ant peptide with probable defensive activity which acts as a potent agonist of the mammalian epidermal growth factor receptor (EGFR). Mimics, both structurally and functionally, vertebrate epidermal growth factor (EGF) peptide hormones. In vivo, intraplantar injection in mice causes long-lasting (several days) hypersensitivity of the injected paw to both mechanical and thermal stimuli. Its long-lasting effect is unusual for venom toxins whose effects are usually immediate. One possible explanation is that it would reduce the duration of a nest attack, discourage future attacks, or enhance the actions of subsequent exposure to other pain-inducing venom peptides. This is OMEGA-ectatommitoxin(02)-Rm1b from Rhytidoponera metallica (Australian green-headed ant).